Here is a 77-residue protein sequence, read N- to C-terminus: MKEQKWIHEGLITESLPNGMFRIRLDNQDMILGYVSGKIRRSFIRILPGDRVKIEVSRYDSTRGRIIYRLRNKDSKD.

The region spanning 1–71 (MKEQKWIHEG…TRGRIIYRLR (71 aa)) is the S1-like domain.

The protein belongs to the IF-1 family. As to quaternary structure, component of the 30S ribosomal translation pre-initiation complex which assembles on the 30S ribosome in the order IF-2 and IF-3, IF-1 and N-formylmethionyl-tRNA(fMet); mRNA recruitment can occur at any time during PIC assembly.

It is found in the plastid. Its subcellular location is the chloroplast. Functionally, one of the essential components for the initiation of protein synthesis. Stabilizes the binding of IF-2 and IF-3 on the 30S subunit to which N-formylmethionyl-tRNA(fMet) subsequently binds. Helps modulate mRNA selection, yielding the 30S pre-initiation complex (PIC). Upon addition of the 50S ribosomal subunit IF-1, IF-2 and IF-3 are released leaving the mature 70S translation initiation complex. The sequence is that of Translation initiation factor IF-1, chloroplastic from Daucus carota (Wild carrot).